A 684-amino-acid chain; its full sequence is Hydroxyproline O-galactosyltransferase GALT2 (684 aa).

Residues M1–H22 are Cytoplasmic-facing. Residues F23–I43 traverse the membrane as a helical; Signal-anchor for type II membrane protein segment. At E44–R684 the chain is on the lumenal side. A disordered region spans residues K80–I102. N-linked (GlcNAc...) asparagine glycans are attached at residues N103, N127, and N162. The 215-residue stretch at R191–T405 folds into the Galectin domain. N-linked (GlcNAc...) asparagine glycosylation is found at N524 and N632.

The protein belongs to the glycosyltransferase 31 family. Requires Mn(2+) as cofactor. In terms of tissue distribution, expressed in stems and at lower levels in cauline leaves and siliques.

Its subcellular location is the golgi apparatus membrane. It participates in protein modification; protein glycosylation. Its function is as follows. Possesses hydroxyproline O-galactosyltransferase activity. Transfers galactose from UDP-galactose to hydroxyproline residues in the arabinogalactan proteins (AGPs). Is specific for AGPs containing non-contiguous peptidyl hydroxyproline residues. Utilizes UDP-galactose solely as sugar donor. The addition of galactose onto the peptidyl hydroxyproline residues in AGP core proteins represents the first committed step in arabinogalactan polysaccharide addition. AGP glycans play essential roles in both vegetative and reproductive plant growth. The chain is Hydroxyproline O-galactosyltransferase GALT2 from Arabidopsis thaliana (Mouse-ear cress).